We begin with the raw amino-acid sequence, 117 residues long: uncharacterized protein (117 aa).

3 consecutive transmembrane segments (helical) span residues 32-52 (VSSS…VTVV), 56-76 (VGVA…VTLL), and 87-107 (LSWC…SFFF).

It localises to the membrane. This is an uncharacterized protein from Saccharomyces cerevisiae (strain ATCC 204508 / S288c) (Baker's yeast).